The chain runs to 140 residues: MLINYLMLLFAAMIIRSFADSGNAIETTSPEITNATTDIPAIRLCGPEGDGYCLHGDCIHARDIDGMYCRCSHGYTGIRCQHVVLVDYQRSEKPNTTTSYIPSPGIMLVLVGIIIITCCLLSVYRFTRRTKLPIQDMVVP.

The first 18 residues, 1 to 18 (MLINYLMLLFAAMIIRSF), serve as a signal peptide directing secretion. Residues 19–100 (ADSGNAIETT…SEKPNTTTSY (82 aa)) are Extracellular-facing. The N-linked (GlcNAc...) asparagine; by host glycan is linked to asparagine 34. The 41-residue stretch at 41–81 (AIRLCGPEGDGYCLHGDCIHARDIDGMYCRCSHGYTGIRCQ) folds into the EGF-like domain. 3 cysteine pairs are disulfide-bonded: cysteine 45–cysteine 58, cysteine 53–cysteine 69, and cysteine 71–cysteine 80. An N-linked (GlcNAc...) asparagine; by host glycan is attached at asparagine 95. Residues 101 to 121 (IPSPGIMLVLVGIIIITCCLL) traverse the membrane as a helical segment. The Cytoplasmic segment spans residues 122–140 (SVYRFTRRTKLPIQDMVVP).

This sequence belongs to the orthopoxvirus OPG019 family. In terms of assembly, interacts with host EGFR.

The protein localises to the host membrane. The protein resides in the secreted. In terms of biological role, stimulates cellular proliferation (hyperplasia)and mobility around infected cells to promote rapid and efficient spread of infection. This effect is beneficial for virus replication in vivo, because poxviruses replicate possibly better in proliferating cells than in quiescent cells. Acts by binding host EGFR, inducing its dimerization, autophosphorylation and leading to activation of several cellular pathways regulating cell proliferation or cell survival. The activation by host EGFR of mitogen activated protein kinases (MAPK) and extracellular-signal regulated kinases (ERK) are essential for the positive effect of vaccinia growth factor on poxvirus virulence in vivo. The sequence is that of Pro-vaccinia growth factor (OPG019) from Homo sapiens (Human).